A 267-amino-acid chain; its full sequence is Putative F-box protein At5g38810 (267 aa).

The F-box domain occupies 4–53 (RKTFDSIPDDLFVEIALRLSSKSIARCRCVSKLWASILYRQDFTELFITK).

This chain is Putative F-box protein At5g38810, found in Arabidopsis thaliana (Mouse-ear cress).